A 127-amino-acid chain; its full sequence is Putative lipoprotein LprJ (127 aa).

The signal sequence occupies residues 1–34 (MTAHTHDGTRTWRTGRQATTLLALLAGVFGGAAS). Residue Cys35 is the site of N-palmitoyl cysteine attachment. Cys35 carries the S-diacylglycerol cysteine lipid modification. Residues 35–99 (CAAPIQADMM…MAEINGMSRD (65 aa)) lie on the Extracellular side of the membrane. The helical transmembrane segment at 100 to 120 (MASTFTIVAIGTYCPAVIAPL) threads the bilayer. Over 121–127 (MPNRLQA) the chain is Cytoplasmic.

May interact with sensor protein KdpD. Modified by Lgt on Cys-35 with an S-linked diacylglycerol, signal peptide is removed by LspA, modified by Lnt with amide-linked fatty acid.

The protein localises to the cell membrane. Its function is as follows. Overexpression induces expression of sensor protein kdpD gene at low K(+) concentrations (0 and 250 uM, tested in M.smegatis). The polypeptide is Putative lipoprotein LprJ (lprJ) (Mycobacterium tuberculosis (strain ATCC 25618 / H37Rv)).